Consider the following 325-residue polypeptide: Cell division protein ZipA (325 aa).

Topologically, residues 1 to 5 are periplasmic; it reads MQELR. The chain crosses the membrane as a helical span at residues 6–26; the sequence is LVLILVGALAIAALLFHGLWT. Over 27-325 the chain is Cytoplasmic; that stretch reads SRKETSSKFG…KQRVKVFCRK (299 aa).

This sequence belongs to the ZipA family. Interacts with FtsZ via their C-terminal domains.

The protein localises to the cell inner membrane. Essential cell division protein that stabilizes the FtsZ protofilaments by cross-linking them and that serves as a cytoplasmic membrane anchor for the Z ring. Also required for the recruitment to the septal ring of downstream cell division proteins. The sequence is that of Cell division protein ZipA from Aliivibrio fischeri (strain MJ11) (Vibrio fischeri).